The sequence spans 89 residues: DNA/RNA-binding protein Alba (89 aa).

The residue at position 11 (K11) is an N6-acetyllysine.

The protein belongs to the histone-like Alba family. Post-translationally, acetylated. Acetylation at Lys-11 decreases DNA-binding affinity.

It is found in the cytoplasm. The protein resides in the chromosome. Functionally, binds double-stranded DNA tightly but without sequence specificity. Involved in DNA compaction. This Thermoplasma acidophilum (strain ATCC 25905 / DSM 1728 / JCM 9062 / NBRC 15155 / AMRC-C165) protein is DNA/RNA-binding protein Alba.